A 429-amino-acid chain; its full sequence is Lysine-specific demethylase JMJ30 (429 aa).

Residues Ser-272–Ser-429 form the JmjC domain. Fe cation-binding residues include His-326, Asp-328, and His-405.

The protein belongs to the JARID1 histone demethylase family. Interacts with EFM. Binds to ATXR2, ARF7 and ARF19. Fe(2+) is required as a cofactor. Expressed ubiquitously in vasculatures, roots, rosette leaves, stems, inflorescences and siliques. Mainly present in the root meristem and root differentiation area. Observed at high level in callus.

It is found in the nucleus. The protein localises to the cytoplasm. Its subcellular location is the endoplasmic reticulum. It catalyses the reaction N(6),N(6),N(6)-trimethyl-L-lysyl(36)-[histone H3] + 2 2-oxoglutarate + 2 O2 = N(6)-methyl-L-lysyl(36)-[histone H3] + 2 formaldehyde + 2 succinate + 2 CO2. The catalysed reaction is N(6),N(6),N(6)-trimethyl-L-lysyl(27)-[histone H3] + 2 2-oxoglutarate + 2 O2 = N(6)-methyl-L-lysyl(27)-[histone H3] + 2 formaldehyde + 2 succinate + 2 CO2. It carries out the reaction N(6),N(6)-dimethyl-L-lysyl(36)-[histone H3] + 2 2-oxoglutarate + 2 O2 = L-lysyl(36)-[histone H3] + 2 formaldehyde + 2 succinate + 2 CO2. In terms of biological role, histone demethylase that demethylates 'Lys-36' (H3K36me) of histone H3 with a specific activity for H3K36me3 and H3K36me2. Also active on 'Lys-27' (H3K27me) of histone H3 with a specific activity for H3K27me3 and H3K27me2. No activity on H3K36me1 and H3K27me1. Involved in the control of flowering time by demethylating H3K36me2 at the FT locus and repressing its expression. Acts within the central clock and contributes, in parallel with LUX, to temperature compensation, probably as a component of the evening complex, to maintain circadian period at increasing temperatures; this mechanism involves binding to and regulation of CCA1 and PRR7 promoters. Works in concert with TOC1 to promote the morning-phased clock genes CCA1 and LHY which function as components of the central oscillator. Together with JMJ32, regulates the flowering-repressor FLOWERING LOCUS C (FLC) locus by removing the repressive histone modification H3 lysine 27 trimethylation (H3K27me3), especially at elevated temperatures (e.g. 29 degrees Celsius), thus preventing extreme precocious flowering. JMJ30 and JMJ32 are regulators involved in the integration of abscisic acid (ABA) and brassinosteroids (BR) signaling pathways. Together with JMJ32, controls ABA-mediated growth arrest during the post-germination stage in unfavorable conditions, and responses to ABA during root development, via the removal of repressive histone mark (H3K27me3) from the SnRK2.8 promoter, thus promoting SnRK2.8 expression and subsequent kinase-dependent ABI3 activation. In addition, removes the repressive histone marks (H3K27me3) from the BZR1 locus in response to stress and ABA, thus activating the BR signaling pathway which, in turn, inhibits the ABA signaling pathway. Able to drive tissue identity changes to promote callus formation form somatic cells via a massive genome-wide chromatin remodeling (e.g. H3K9me3 demethylation) leading to the induction of Lateral organ Boundaries-Domain (LBD) genes (e.g. LBD16 and LBD29) that establish root primordia; when in complex with ARF proteins (e.g. ARF7 and ARF19), recruits ATXR2 which promotes the deposition of H3K36me3 at LBD genes promoters, thus ensuring their stable activation during callus formation. In Arabidopsis thaliana (Mouse-ear cress), this protein is Lysine-specific demethylase JMJ30.